The sequence spans 291 residues: Phosphatidylcholine-sterol acyltransferase (291 aa).

N28 is a glycosylation site (N-linked (GlcNAc...) asparagine). The active-site Nucleophile is the S125. N179 carries N-linked (GlcNAc...) asparagine glycosylation. C220 and C263 are joined by a disulfide. D252 serves as the catalytic Charge relay system. N280 is a glycosylation site (N-linked (GlcNAc...) asparagine).

It belongs to the AB hydrolase superfamily. Lipase family.

It is found in the secreted. The catalysed reaction is a sterol + a 1,2-diacyl-sn-glycero-3-phosphocholine = a sterol ester + a 1-acyl-sn-glycero-3-phosphocholine. With respect to regulation, APOA1 is the most potent activator in plasma. Also activated by APOE, APOC1 and APOA4. Its function is as follows. Central enzyme in the extracellular metabolism of plasma lipoproteins. Synthesized mainly in the liver and secreted into plasma where it converts cholesterol and phosphatidylcholines (lecithins) to cholesteryl esters and lysophosphatidylcholines on the surface of high and low density lipoproteins (HDLs and LDLs). The cholesterol ester is then transported back to the liver. Has a preference for plasma 16:0-18:2 or 18:O-18:2 phosphatidylcholines. Also produced in the brain by primary astrocytes, and esterifies free cholesterol on nascent APOE-containing lipoproteins secreted from glia and influences cerebral spinal fluid (CSF) APOE- and APOA1 levels. Together with APOE and the cholesterol transporter ABCA1, plays a key role in the maturation of glial-derived, nascent lipoproteins. Required for remodeling high-density lipoprotein particles into their spherical forms. This chain is Phosphatidylcholine-sterol acyltransferase (LCAT), found in Myodes glareolus (Bank vole).